Reading from the N-terminus, the 328-residue chain is Phosphate acyltransferase (328 aa).

This sequence belongs to the PlsX family. In terms of assembly, homodimer. Probably interacts with PlsY.

Its subcellular location is the cytoplasm. The catalysed reaction is a fatty acyl-[ACP] + phosphate = an acyl phosphate + holo-[ACP]. The protein operates within lipid metabolism; phospholipid metabolism. In terms of biological role, catalyzes the reversible formation of acyl-phosphate (acyl-PO(4)) from acyl-[acyl-carrier-protein] (acyl-ACP). This enzyme utilizes acyl-ACP as fatty acyl donor, but not acyl-CoA. The protein is Phosphate acyltransferase of Geobacillus thermodenitrificans (strain NG80-2).